A 639-amino-acid chain; its full sequence is UvrABC system protein C (639 aa).

One can recognise a GIY-YIG domain in the interval 20–97; it reads ERSGVYRMFD…IKKFQPKFNI (78 aa). The 36-residue stretch at 207–242 folds into the UVR domain; sequence KELQENLSRKMEELSSQMRFEEAAEIRDRIKALSYV.

It belongs to the UvrC family. In terms of assembly, interacts with UvrB in an incision complex.

It is found in the cytoplasm. Functionally, the UvrABC repair system catalyzes the recognition and processing of DNA lesions. UvrC both incises the 5' and 3' sides of the lesion. The N-terminal half is responsible for the 3' incision and the C-terminal half is responsible for the 5' incision. This is UvrABC system protein C from Rickettsia rickettsii (strain Iowa).